The chain runs to 367 residues: UDP-N-acetylglucosamine--N-acetylmuramyl-(pentapeptide) pyrophosphoryl-undecaprenol N-acetylglucosamine transferase (367 aa).

Residues 15–17 (TGG), asparagine 127, arginine 163, serine 191, isoleucine 249, and glutamine 294 each bind UDP-N-acetyl-alpha-D-glucosamine.

This sequence belongs to the glycosyltransferase 28 family. MurG subfamily.

Its subcellular location is the cell inner membrane. It catalyses the reaction di-trans,octa-cis-undecaprenyl diphospho-N-acetyl-alpha-D-muramoyl-L-alanyl-D-glutamyl-meso-2,6-diaminopimeloyl-D-alanyl-D-alanine + UDP-N-acetyl-alpha-D-glucosamine = di-trans,octa-cis-undecaprenyl diphospho-[N-acetyl-alpha-D-glucosaminyl-(1-&gt;4)]-N-acetyl-alpha-D-muramoyl-L-alanyl-D-glutamyl-meso-2,6-diaminopimeloyl-D-alanyl-D-alanine + UDP + H(+). It participates in cell wall biogenesis; peptidoglycan biosynthesis. In terms of biological role, cell wall formation. Catalyzes the transfer of a GlcNAc subunit on undecaprenyl-pyrophosphoryl-MurNAc-pentapeptide (lipid intermediate I) to form undecaprenyl-pyrophosphoryl-MurNAc-(pentapeptide)GlcNAc (lipid intermediate II). This Burkholderia vietnamiensis (strain G4 / LMG 22486) (Burkholderia cepacia (strain R1808)) protein is UDP-N-acetylglucosamine--N-acetylmuramyl-(pentapeptide) pyrophosphoryl-undecaprenol N-acetylglucosamine transferase.